The sequence spans 91 residues: Large ribosomal subunit protein bL27 (91 aa).

The tract at residues 1–20 is disordered; sequence MAHKKGVGSSKNGRDSNPKY.

It belongs to the bacterial ribosomal protein bL27 family.

The sequence is that of Large ribosomal subunit protein bL27 from Deinococcus geothermalis (strain DSM 11300 / CIP 105573 / AG-3a).